Consider the following 507-residue polypeptide: RNA-binding protein Nova-1 (507 aa).

Residues 1–44 (MMAAAPIQQNGTHTGVPIDLDPPDSRKRPLEAPPEAGSTKRTNT) are disordered. A Bipartite nuclear localization signal motif is present at residues 27 to 43 (KRPLEAPPEAGSTKRTN). The KH 1 domain occupies 49–116 (QYFLKVLIPS…EALNAVHGFI (68 aa)). A disordered region spans residues 139 to 171 (QTTVNPDRIKQTLPSSPTTTKSSPSDPMTTSRA). The span at 150 to 169 (TLPSSPTTTKSSPSDPMTTS) shows a compositional bias: low complexity. S154 bears the Phosphoserine mark. KH domains lie at 171 to 237 (ANQV…VELI) and 421 to 488 (KDVV…QYLI). The required for RNA binding stretch occupies residues 419–503 (GSKDVVEIAV…YEQGVRAANP (85 aa)).

In terms of assembly, interacts with PTBP2; the interaction is direct. Expressed in cerebellum, brain stem, hippocampus, and frontal cortex.

The protein localises to the nucleus. Its function is as follows. Functions to regulate alternative splicing in neurons by binding pre-mRNA in a sequence-specific manner to activate exon inclusion or exclusion. It binds specifically to the sequences 5'-YCAY-3' and regulates splicing in only a subset of regulated exons. Binding to an exonic 5'-YCAY-3' cluster changes the protein complexes assembled on pre-mRNA, blocking U1 snRNP binding and exon inclusion, whereas binding to an intronic 5'-YCAY-3' cluster enhances spliceosome assembly and exon inclusion. Binding to 5'-YCAY-3' clusters results in a local and asymmetric action to regulate spliceosome assembly and alternative splicing in neurons. Binding to an exonic 5'-YCAY-3' cluster changed the protein complexes assembled on pre-mRNA, blocking U1 snRNP (small nuclear ribonucleoprotein) binding and exon inclusion, whereas binding to an intronic 5'-YCAY-3' cluster enhanced spliceosome assembly and exon inclusion. With NOVA1, they perform unique biological functions in different brain areas and cell types. Autoregulates its own expression by acting as a splicing repressor. Acts to activate the inclusion of exon E3A in the glycine receptor alpha-2 chain and of exon E9 in gamma-aminobutyric-acid receptor gamma-2 subunit via a distal downstream UCAU-rich intronic splicing enhancer. Acts to regulate a novel glycine receptor alpha-2 chain splice variant (alpha-2N) in developing spinal cord. The protein is RNA-binding protein Nova-1 of Homo sapiens (Human).